We begin with the raw amino-acid sequence, 113 residues long: Mitochondrial zinc maintenance protein 1, mitochondrial (113 aa).

It belongs to the complex I LYR family. MZM1 subfamily. Interacts with RIP1.

It localises to the mitochondrion matrix. Its function is as follows. Assembly factor required for Rieske Fe-S protein RIP1 incorporation into the cytochrome b-c1 (CIII) complex. Functions as a chaperone, binding to this subunit within the mitochondrial matrix and stabilizing it prior to its translocation and insertion into the late CIII dimeric intermediate within the mitochondrial inner membrane. Modulates the mitochondrial matrix zinc pool. This Talaromyces stipitatus (strain ATCC 10500 / CBS 375.48 / QM 6759 / NRRL 1006) (Penicillium stipitatum) protein is Mitochondrial zinc maintenance protein 1, mitochondrial (MZM1).